The chain runs to 423 residues: Osteomodulin (423 aa).

The first 20 residues, 1–20, serve as a signal peptide directing secretion; the sequence is MGFLSPIYVLFFCFGVRVYC. A sulfotyrosine mark is found at Tyr22, Tyr25, Tyr31, Tyr39, Tyr51, and Tyr77. Residues 53–91 enclose the LRRNT domain; that stretch reads VPFYNNILGCAKECFCPTNFPTSMYCDNRKLKTIPIIPM. LRR repeat units lie at residues 92–113, 116–129, 142–164, 165–184, 187–207, 213–233, 234–255, 258–279, 281–294, 301–322, and 331–353; these read HIQQ…SFIN, HLKE…KIKS, NLQQ…PKSL, ERLL…AMDG, NVTM…KEKT, KLMQ…GLPS, SLMY…YFDK, KLHA…IFNL, NLIE…KLKQ, NLEH…MICP, and HLTY…IFFC. Asn113 and Asn121 each carry an N-linked (GlcNAc...) asparagine glycan. Asn187 carries an N-linked (GlcNAc...) asparagine glycan. Asn242 and Asn278 each carry an N-linked (GlcNAc...) asparagine glycan. N-linked (GlcNAc...) asparagine glycosylation is present at Asn316. Residues Cys321 and Cys353 are joined by a disulfide bond. A disordered region spans residues 381-406; that stretch reads RSYQEEEEEDDHDSQDNTLEGQEVSD. Tyr413 and Tyr414 each carry sulfotyrosine.

Belongs to the small leucine-rich proteoglycan (SLRP) family. SLRP class II subfamily. In terms of assembly, binds the alpha(V)beta(3)-integrin. In terms of processing, glycosylated; contains keratan sulfate. In terms of tissue distribution, bone specific.

It localises to the secreted. The protein localises to the extracellular space. The protein resides in the extracellular matrix. May be implicated in biomineralization processes. Has a function in binding of osteoblasts via the alpha(V)beta(3)-integrin. The chain is Osteomodulin (Omd) from Mus musculus (Mouse).